Reading from the N-terminus, the 1405-residue chain is DNA-directed RNA polymerase subunit beta' (1405 aa).

The Zn(2+) site is built by Cys70, Cys72, Cys85, and Cys88. Mg(2+) contacts are provided by Asp460, Asp462, and Asp464. Cys814, Cys888, Cys895, and Cys898 together coordinate Zn(2+).

It belongs to the RNA polymerase beta' chain family. As to quaternary structure, the RNAP catalytic core consists of 2 alpha, 1 beta, 1 beta' and 1 omega subunit. When a sigma factor is associated with the core the holoenzyme is formed, which can initiate transcription. It depends on Mg(2+) as a cofactor. Requires Zn(2+) as cofactor.

The enzyme catalyses RNA(n) + a ribonucleoside 5'-triphosphate = RNA(n+1) + diphosphate. Functionally, DNA-dependent RNA polymerase catalyzes the transcription of DNA into RNA using the four ribonucleoside triphosphates as substrates. This chain is DNA-directed RNA polymerase subunit beta', found in Shewanella sediminis (strain HAW-EB3).